Here is a 356-residue protein sequence, read N- to C-terminus: Dihydroorotate dehydrogenase (quinone) (356 aa).

FMN contacts are provided by residues 68 to 72 (AGFDK) and Thr92. Lys72 contacts substrate. 117 to 121 (NRMGF) is a binding site for substrate. 2 residues coordinate FMN: Asn145 and Asn178. Asn178 provides a ligand contact to substrate. The active-site Nucleophile is the Ser181. Substrate is bound at residue Asn183. Residues Lys214 and Thr242 each contribute to the FMN site. 243-244 (NT) is a substrate binding site. Residues Gly266, Gly295, and 316-317 (YT) contribute to the FMN site.

The protein belongs to the dihydroorotate dehydrogenase family. Type 2 subfamily. As to quaternary structure, monomer. FMN is required as a cofactor.

Its subcellular location is the cell membrane. It carries out the reaction (S)-dihydroorotate + a quinone = orotate + a quinol. Its pathway is pyrimidine metabolism; UMP biosynthesis via de novo pathway; orotate from (S)-dihydroorotate (quinone route): step 1/1. Its function is as follows. Catalyzes the conversion of dihydroorotate to orotate with quinone as electron acceptor. This is Dihydroorotate dehydrogenase (quinone) from Mycobacterium sp. (strain KMS).